Reading from the N-terminus, the 302-residue chain is F-box protein SKIP19 (302 aa).

One can recognise an F-box domain in the interval 16–63 (STNWTELPPELTSAILHRLGAIEILENAQKVCRSWRRVCKDPSMWRKI).

Part of a SCF (ASK-cullin-F-box) protein ligase complex. Interacts with CUL1 and SPK1B/ASK2.

The protein resides in the nucleus. The protein operates within protein modification; protein ubiquitination. Its function is as follows. Component of SCF(ASK-cullin-F-box) E3 ubiquitin ligase complexes, which may mediate the ubiquitination and subsequent proteasomal degradation of target proteins. This chain is F-box protein SKIP19 (SKIP19), found in Arabidopsis thaliana (Mouse-ear cress).